Consider the following 1953-residue polypeptide: Protein BNI1 (1953 aa).

Disordered stretches follow at residues 1–152 (MLKN…ASSL), 230–258 (MRAN…ANSS), 263–282 (KSVL…SNSL), and 287–306 (TLSS…SGSL). Positions 31–40 (ANSNATNSNT) are enriched in low complexity. Polar residues-rich tracts occupy residues 41-100 (GSPT…SQYM) and 110-143 (VSSQ…RQHT). In terms of domain architecture, GBD/FH3 spans 174–696 (EMPSDPYEVE…NVSVASTSDE (523 aa)). Residues 232–246 (ANTTSSSTASRTSMA) show a composition bias toward low complexity. The span at 263-278 (KSVLMTSASSPTSTVY) shows a compositional bias: polar residues. Phosphoserine is present on residues Ser-311 and Ser-325. Positions 312–337 (LNNIYRGGAENNTSASTLPGDRTNRP) are disordered. Coiled-coil stretches lie at residues 712–807 (QTDE…TILN), 864–894 (NKRL…EFEK), and 928–981 (NKLN…YKGF). Disordered regions lie at residues 990-1014 (IMDS…SLDP), 1040-1094 (HEIQ…LDAL), and 1149-1330 (TQKV…MPAS). One can recognise an FH1 domain in the interval 1053 to 1337 (SSSSSDDESE…PASQIKSAVT (285 aa)). 2 positions are modified to phosphoserine: Ser-1085 and Ser-1170. A compositionally biased stretch (basic and acidic residues) spans 1184-1211 (DKAEKDMRQHVENGKQGRVVNHEEDKTA). Positions 1217 to 1237 (SKLNNTDGAEDLSTQSSVLSS) are enriched in polar residues. Positions 1238-1250 (QPPPPPPPPPPVP) are enriched in pro residues. The segment covering 1257-1270 (SLEKEKKSEDDTVK) has biased composition (basic and acidic residues). A compositionally biased stretch (pro residues) spans 1278 to 1292 (PAPPPPPPPPPPPPM). Residues Ser-1338 and Ser-1344 each carry the phosphoserine modification. The FH2 domain occupies 1348 to 1766 (FEKYPRPHKK…YIKHKKIVEE (419 aa)). Residues 1732–1811 (KFADFINEYK…DKLLEQLKNA (80 aa)) adopt a coiled-coil conformation. Over residues 1768 to 1779 (QKRAQEKEKQKE) the composition is skewed to basic and acidic residues. Disordered stretches follow at residues 1768 to 1797 (QKRA…AEDR), 1809 to 1844 (KNAG…LLND), and 1872 to 1899 (PTPL…LEDQ). Residues 1792–1826 (DEAEDRRAVMDKLLEQLKNAGPAKSDPSSARKRAL) form the DAD domain. Over residues 1821 to 1830 (ARKRALVRKK) the composition is skewed to basic residues. Positions 1880–1896 (VMNTSEDLPSPSKTSAL) are enriched in polar residues. Thr-1918 carries the post-translational modification Phosphothreonine.

This sequence belongs to the formin homology family. BNI1 subfamily. Homodimer, and possibly also homotetramer. Interacts with PFY1 via the FH1 domain and with actin via the FH2 domain.

It is found in the cell membrane. The protein localises to the cell projection. The protein resides in the ruffle membrane. It localises to the cytoplasm. Its subcellular location is the cytoskeleton. Functionally, required for the assembly of F-actin structures, such as actin cables and stress fibers. Nucleates actin filaments. Binds to the barbed end of the actin filament and acts as a leaky capper, slowing both polymerization and depolymerization. Protects the growing actin fiber from tight capping proteins and so increases the time of elongation and the total amount of F-actin. May organize microtubules by mediating spindle positioning and movement in the budding process. Potential target of the RHO family members. The protein is Protein BNI1 (BNI1) of Saccharomyces cerevisiae (strain ATCC 204508 / S288c) (Baker's yeast).